The following is a 382-amino-acid chain: Mannitol-1-phosphate 5-dehydrogenase (382 aa).

3–14 (ALHFGAGNIGRG) provides a ligand contact to NAD(+). The residue at position 269 (Lys-269) is an N6-acetyllysine.

The protein belongs to the mannitol dehydrogenase family.

The enzyme catalyses D-mannitol 1-phosphate + NAD(+) = beta-D-fructose 6-phosphate + NADH + H(+). The chain is Mannitol-1-phosphate 5-dehydrogenase from Escherichia coli O81 (strain ED1a).